A 67-amino-acid chain; its full sequence is Protein AaeX (67 aa).

A run of 2 helical transmembrane segments spans residues 3–23 (LFPVIVVFGLSFPPIFFELLL) and 43–63 (FVWHPALFNTALYCCLFYLIS).

The protein belongs to the AaeX family.

The protein resides in the cell membrane. The sequence is that of Protein AaeX from Salmonella agona (strain SL483).